A 429-amino-acid polypeptide reads, in one-letter code: GTPase Obg (429 aa).

Positions 1-158 constitute an Obg domain; it reads MFVDQVKIYV…RNVQLELKVL (158 aa). The segment at 124-145 is disordered; that stretch reads RGNKRFATPANPAPELSENGEP. In terms of domain architecture, OBG-type G spans 159 to 329; it reads ADVGLVGFPS…LLLAIADKLE (171 aa). Residues 165-172, 190-194, 212-215, 282-285, and 310-312 contribute to the GTP site; these read GFPSVGKS, FTTIV, DLPG, NKMD, and SAV. Mg(2+)-binding residues include serine 172 and threonine 192. The region spanning 351 to 429 is the OCT domain; the sequence is KYVADEPDFE…LLDYEFEFMD (79 aa).

This sequence belongs to the TRAFAC class OBG-HflX-like GTPase superfamily. OBG GTPase family. As to quaternary structure, monomer. The cofactor is Mg(2+).

The protein resides in the cytoplasm. Its function is as follows. An essential GTPase which binds GTP, GDP and possibly (p)ppGpp with moderate affinity, with high nucleotide exchange rates and a fairly low GTP hydrolysis rate. Plays a role in control of the cell cycle, stress response, ribosome biogenesis and in those bacteria that undergo differentiation, in morphogenesis control. This is GTPase Obg from Listeria monocytogenes serotype 4a (strain HCC23).